A 983-amino-acid chain; its full sequence is Ephrin type-A receptor 3 (983 aa).

The N-terminal stretch at 1 to 19 is a signal peptide; the sequence is MDRRRLPLLLLCAALGSAG. The Extracellular segment spans residues 20-540; it reads RLSARPGNEV…SFSISSENSQ (521 aa). One can recognise an Eph LBD domain in the interval 28-206; that stretch reads EVNLLDSKTI…YFKKCPFTVK (179 aa). N-linked (GlcNAc...) asparagine glycans are attached at residues Asn231, Asn336, Asn390, Asn403, and Asn492. Fibronectin type-III domains follow at residues 324–434 and 435–530; these read PPSA…TNQA and APSP…TSPD. Residues 541-564 traverse the membrane as a helical segment; that stretch reads VVMIAISAAVAIILLTVVVYVLIG. The Cytoplasmic portion of the chain corresponds to 565–983; the sequence is RFCGYKKSKH…THTKNSPVPV (419 aa). Phosphotyrosine; by autocatalysis occurs at positions 596 and 602. The 262-residue stretch at 621-882 folds into the Protein kinase domain; the sequence is ISIDKVVGAG…QIVSILDKLI (262 aa). Residues 628–633, Lys653, and 700–706 each bind ATP; these read GAGEFG and EYMENGS. Tyr701 bears the Phosphotyrosine; by autocatalysis mark. The active-site Proton acceptor is the Asp746. An ATP-binding site is contributed by 750-751; sequence RN. Tyr779 carries the post-translational modification Phosphotyrosine; by autocatalysis. In terms of domain architecture, SAM spans 911–975; the sequence is SAFRTAGDWL…VSSIKTLETH (65 aa). The PDZ-binding motif lies at 981 to 983; sequence VPV.

The protein belongs to the protein kinase superfamily. Tyr protein kinase family. Ephrin receptor subfamily. In terms of assembly, heterotetramer upon binding of the ligand. The heterotetramer is composed of an ephrin dimer and a receptor dimer. Oligomerization is probably required to induce biological responses. Post-translationally, autophosphorylates upon activation by EFNA5. Highly expressed in the developing brain and embryonic tissues. In adult, the greatest levels of expression occur in the brain. It is expressed in a graded manner across the retina with the highest expression at its temporal pole. Detectable in all other adult tissues examined, except the liver.

It localises to the cell membrane. It catalyses the reaction L-tyrosyl-[protein] + ATP = O-phospho-L-tyrosyl-[protein] + ADP + H(+). Receptor tyrosine kinase which binds promiscuously membrane-bound ephrin family ligands residing on adjacent cells, leading to contact-dependent bidirectional signaling into neighboring cells. The signaling pathway downstream of the receptor is referred to as forward signaling while the signaling pathway downstream of the ephrin ligand is referred to as reverse signaling. Highly promiscuous for ephrin-A ligands it binds preferentially EFNA5. Upon activation by EFNA5 regulates cell-cell adhesion, cytoskeletal organization and cell migration. Plays a role in cardiac cells migration and differentiation probably through activation by EFNA1. Involved in the retinotectal mapping of neurons. May also control the segregation but not the guidance of motor and sensory axons during neuromuscular circuit development. The protein is Ephrin type-A receptor 3 (EPHA3) of Gallus gallus (Chicken).